The chain runs to 236 residues: Small ribosomal subunit protein uS2c (236 aa).

It belongs to the universal ribosomal protein uS2 family.

The protein resides in the plastid. Its subcellular location is the chloroplast. This is Small ribosomal subunit protein uS2c (rps2) from Barbarea verna (Land cress).